Here is a 71-residue protein sequence, read N- to C-terminus: Stathmin-1-B (71 aa).

Residues 1–67 (KREHEKEVLQ…EIRKGKECKE (67 aa)) are a coiled coil. The 71-residue stretch at 1–71 (KREHEKEVLQ…GKECKEPSED (71 aa)) folds into the SLD domain.

Belongs to the stathmin family. As to quaternary structure, binds to two alpha/beta-tubulin heterodimers. In terms of processing, from unphosphorylated forms to highly phosphorylated ones in the mature egg, followed by progressive dephosphorylation from the mid-blastula to the tailbud stage. In terms of tissue distribution, ubiquitous. Mostly abundant in brain and oocytes.

It localises to the cytoplasm. Its subcellular location is the cytoskeleton. Its function is as follows. Involved in the regulation of the microtubule (MT) filament system by destabilizing microtubules. It prevents assembly and promotes disassembly of microtubules. This Xenopus laevis (African clawed frog) protein is Stathmin-1-B (stmn1-b).